We begin with the raw amino-acid sequence, 798 residues long: Tripartite terminase subunit 1 (798 aa).

The C3H1-type zinc-finger motif lies at 191-219; sequence CFQCYEELMAVPNQGRSINRRMQGLLCDH. Over residues 416-429 the composition is skewed to low complexity; sequence AAGAARSRAEAASG. The disordered stretch occupies residues 416–458; the sequence is AAGAARSRAEAASGAGAGGEEGAGAAAGRGNTGGDEGAGTTTA. Gly residues predominate over residues 430 to 452; the sequence is AGAGGEEGAGAAAGRGNTGGDEG. ATP is bound at residue 674–681; it reads YNETFGKQ.

This sequence belongs to the herpesviridae TRM1 protein family. In terms of assembly, associates with TRM2 and TRM3 to form the tripartite terminase complex. Interacts with portal protein.

The protein resides in the host nucleus. Component of the molecular motor that translocates viral genomic DNA in empty capsid during DNA packaging. Forms a tripartite terminase complex together with TRM2 and TRM3 in the host cytoplasm. Once the complex reaches the host nucleus, it interacts with the capsid portal vertex. This portal forms a ring in which genomic DNA is translocated into the capsid. TRM1 carries an endonuclease activity that plays an important role for the cleavage of concatemeric viral DNA into unit length genomes. In Murid herpesvirus 1 (strain Smith) (MuHV-1), this protein is Tripartite terminase subunit 1.